The primary structure comprises 129 residues: Small ribosomal subunit protein uS11 (129 aa).

Belongs to the universal ribosomal protein uS11 family. Part of the 30S ribosomal subunit. Interacts with proteins S7 and S18. Binds to IF-3.

Functionally, located on the platform of the 30S subunit, it bridges several disparate RNA helices of the 16S rRNA. Forms part of the Shine-Dalgarno cleft in the 70S ribosome. The protein is Small ribosomal subunit protein uS11 of Pseudomonas entomophila (strain L48).